Consider the following 237-residue polypeptide: Ribonuclease PH (237 aa).

Phosphate-binding positions include Arg-86 and 124-126; that span reads GTR.

Belongs to the RNase PH family. Homohexameric ring arranged as a trimer of dimers.

It carries out the reaction tRNA(n+1) + phosphate = tRNA(n) + a ribonucleoside 5'-diphosphate. In terms of biological role, phosphorolytic 3'-5' exoribonuclease that plays an important role in tRNA 3'-end maturation. Removes nucleotide residues following the 3'-CCA terminus of tRNAs; can also add nucleotides to the ends of RNA molecules by using nucleoside diphosphates as substrates, but this may not be physiologically important. Probably plays a role in initiation of 16S rRNA degradation (leading to ribosome degradation) during starvation. This is Ribonuclease PH from Shewanella sediminis (strain HAW-EB3).